The following is a 2924-amino-acid chain: Zinc finger ZZ-type and EF-hand domain-containing protein 1 (2924 aa).

Residues 1 to 41 (MGNAPSNSSEDEAAAAGGEGWSPHQDWAADSGTTPGPGPAA) form a disordered region. G2 is lipidated: N-myristoyl glycine. Residues 28 to 41 (AADSGTTPGPGPAA) are compositionally biased toward low complexity. Residues 111-146 (CSGEQFEEAFAQFDAEGDGTVDAENMLEALKNSSGA) form the EF-hand domain. Residues 226–405 (LVQKEKESPG…AIWYWSLLTS (180 aa)) form the DOC domain. A Phosphoserine modification is found at S240. Over residues 1452-1470 (HLQPLDRRQRTSSVVEEHF) the composition is skewed to basic and acidic residues. The segment at 1452–1527 (HLQPLDRRQR…STPTRRPPFT (76 aa)) is disordered. The span at 1472–1485 (GSASPTEAATPAAG) shows a compositional bias: low complexity. S1475, S1488, and S1509 each carry phosphoserine. A Phosphothreonine modification is found at T1510. Pro residues predominate over residues 1514 to 1523 (PSPPSTPTRR). S1515 carries the phosphoserine modification. 2 positions are modified to phosphothreonine: T1519 and T1521. A phosphoserine mark is found at S1535 and S1538. 2 consecutive ZZ-type zinc fingers follow at residues 1776–1831 (NVDI…FTCD) and 1825–1880 (NMEF…MVTI). Positions 1781, 1784, 1795, 1798, 1804, 1807, 1817, 1821, 1830, 1833, 1844, 1847, 1853, 1856, 1866, and 1870 each coordinate Zn(2+). Residues 2388-2418 (DLELDERGDQEEELDRPVSSPGEAEQKKLDP) are disordered. S2407 bears the Phosphoserine mark. An N6-acetyllysine modification is found at K2630.

Interacts with KLF6 and KLF9. Interacts via (ZZ-type 2 zinc finger) with histone H3 trimethylated at 'Lys-4' (H3K4me3) and histone H3 acetylated at 'Lys-4' (H3K4ac).

Functionally, histone H3 reader which may act as a transcriptional coactivator for KLF6 and KLF9 transcription factors. The chain is Zinc finger ZZ-type and EF-hand domain-containing protein 1 (Zzef1) from Mus musculus (Mouse).